A 38-amino-acid polypeptide reads, in one-letter code: Photosystem II reaction center protein X 1 (38 aa).

A helical transmembrane segment spans residues 8–28; the sequence is FLWSLLYGAVVLGLLFGAIVF.

Belongs to the PsbX family. Type 1 subfamily. PSII is composed of 1 copy each of membrane proteins PsbA, PsbB, PsbC, PsbD, PsbE, PsbF, PsbH, PsbI, PsbJ, PsbK, PsbL, PsbM, PsbT, PsbX, PsbY, PsbZ, Psb30/Ycf12, peripheral proteins PsbO, CyanoQ (PsbQ), PsbU, PsbV and a large number of cofactors. It forms dimeric complexes.

Its subcellular location is the cellular thylakoid membrane. In terms of biological role, involved in the binding and/or turnover of quinones at the Q(B) site of photosystem II (PSII). PSII is a light-driven water plastoquinone oxidoreductase, using light energy to abstract electrons from H(2)O, generating a proton gradient subsequently used for ATP formation. This Synechococcus sp. (strain JA-3-3Ab) (Cyanobacteria bacterium Yellowstone A-Prime) protein is Photosystem II reaction center protein X 1.